Consider the following 813-residue polypeptide: Leucine--tRNA ligase (813 aa).

The 'HIGH' region signature appears at 42-52 (PYTSGNLHIGH). The 'KMSKS' region signature appears at 580–584 (KMSKS). Residue lysine 583 participates in ATP binding.

The protein belongs to the class-I aminoacyl-tRNA synthetase family.

The protein localises to the cytoplasm. The enzyme catalyses tRNA(Leu) + L-leucine + ATP = L-leucyl-tRNA(Leu) + AMP + diphosphate. The polypeptide is Leucine--tRNA ligase (Dehalococcoides mccartyi (strain ATCC BAA-2100 / JCM 16839 / KCTC 5957 / BAV1)).